The following is a 1309-amino-acid chain: DNA repair protein RAD9 (1309 aa).

The segment covering M1–A19 has biased composition (polar residues). Residues M1–P39 form a disordered region. S26, S56, and S205 each carry phosphoserine. T218 is modified (phosphothreonine). At S248 the chain carries Phosphoserine. A disordered region spans residues N280–S299. Residues I284–S299 are compositionally biased toward basic and acidic residues. Phosphoserine is present on residues S312 and S315. A disordered region spans residues N342–N365. Residues S343–N352 show a composition bias toward polar residues. A Phosphoserine modification is found at S462. 2 positions are modified to phosphothreonine: T471 and T474. The segment at P490–E512 is disordered. Residues E491 to P508 are compositionally biased toward polar residues. The residue at position 568 (S568) is a Phosphoserine. 2 disordered regions span residues K636–D655 and I691–L731. Over residues L642 to D655 the composition is skewed to basic and acidic residues. Position 729 is a phosphoserine (S729). Residues R994 to Y1122 enclose the BRCT domain.

As to quaternary structure, physically associates with RAD53.

The protein resides in the nucleus. Essential for cell cycle arrest at the G2 stage following DNA damage by X-irradiation or inactivation of DNA ligase. This chain is DNA repair protein RAD9 (RAD9), found in Saccharomyces cerevisiae (strain ATCC 204508 / S288c) (Baker's yeast).